The chain runs to 466 residues: Ribulose bisphosphate carboxylase large chain (466 aa).

Position 5 is an N6,N6,N6-trimethyllysine (lysine 5). Substrate contacts are provided by asparagine 114 and threonine 164. Residue lysine 166 is the Proton acceptor of the active site. Substrate is bound at residue lysine 168. Residues lysine 192, aspartate 194, and glutamate 195 each contribute to the Mg(2+) site. Residue lysine 192 is modified to N6-carboxylysine. Histidine 285 serves as the catalytic Proton acceptor. Residues arginine 286, histidine 318, and serine 370 each contribute to the substrate site.

The protein belongs to the RuBisCO large chain family. Type I subfamily. As to quaternary structure, heterohexadecamer of 8 large chains and 8 small chains; disulfide-linked. The disulfide link is formed within the large subunit homodimers. The cofactor is Mg(2+). Post-translationally, the disulfide bond which can form in the large chain dimeric partners within the hexadecamer appears to be associated with oxidative stress and protein turnover.

It is found in the plastid. It localises to the chloroplast. It carries out the reaction 2 (2R)-3-phosphoglycerate + 2 H(+) = D-ribulose 1,5-bisphosphate + CO2 + H2O. The enzyme catalyses D-ribulose 1,5-bisphosphate + O2 = 2-phosphoglycolate + (2R)-3-phosphoglycerate + 2 H(+). RuBisCO catalyzes two reactions: the carboxylation of D-ribulose 1,5-bisphosphate, the primary event in carbon dioxide fixation, as well as the oxidative fragmentation of the pentose substrate in the photorespiration process. Both reactions occur simultaneously and in competition at the same active site. This is Ribulose bisphosphate carboxylase large chain from Caltha palustris (Yellow marsh marigold).